A 505-amino-acid chain; its full sequence is Probable cytosol aminopeptidase (505 aa).

2 residues coordinate Mn(2+): Lys-269 and Asp-274. The active site involves Lys-281. Positions 292, 351, and 353 each coordinate Mn(2+). The active site involves Arg-355.

This sequence belongs to the peptidase M17 family. The cofactor is Mn(2+).

The protein resides in the cytoplasm. The enzyme catalyses Release of an N-terminal amino acid, Xaa-|-Yaa-, in which Xaa is preferably Leu, but may be other amino acids including Pro although not Arg or Lys, and Yaa may be Pro. Amino acid amides and methyl esters are also readily hydrolyzed, but rates on arylamides are exceedingly low.. The catalysed reaction is Release of an N-terminal amino acid, preferentially leucine, but not glutamic or aspartic acids.. Its function is as follows. Presumably involved in the processing and regular turnover of intracellular proteins. Catalyzes the removal of unsubstituted N-terminal amino acids from various peptides. The protein is Probable cytosol aminopeptidase of Rhodococcus opacus (strain B4).